The primary structure comprises 557 residues: Polypyrimidine tract-binding protein 1 (557 aa).

Met-1 is modified (N-acetylmethionine). Position 16 is a phosphoserine (Ser-16). RRM domains lie at 59–143, 184–260, and 363–437; these read RVIH…SSPN, LRII…FSKL, and SVLL…LSKH. A Glycyl lysine isopeptide (Lys-Gly) (interchain with G-Cter in SUMO2) cross-link involves residue Lys-65. The residue at position 127 (Tyr-127) is a Phosphotyrosine. Thr-138 carries the post-translational modification Phosphothreonine. A Phosphoserine modification is found at Ser-141. Lys-218 participates in a covalent cross-link: Glycyl lysine isopeptide (Lys-Gly) (interchain with G-Cter in SUMO2). The disordered stretch occupies residues 437-460; that stretch reads HQSVQLPREGQEDQGLTKDYGNSP. Ser-459 is subject to Phosphoserine. Residues 480-555 form the RRM 4 domain; that stretch reads ATLHLSNIPP…HHLRVSFSKS (76 aa).

In terms of assembly, monomer. Part of a ternary complex containing KHSRP, PTBP1, PTBP2 and HNRPH1. Interacts with RAVER1 and SFPQ.

The protein resides in the nucleus. In terms of biological role, plays a role in pre-mRNA splicing and in the regulation of alternative splicing events. Activates exon skipping of its own pre-mRNA during muscle cell differentiation. Binds to the polypyrimidine tract of introns. May promote RNA looping when bound to two separate polypyrimidine tracts in the same pre-mRNA. May promote the binding of U2 snRNP to pre-mRNA. Cooperates with RAVER1 to modulate switching between mutually exclusive exons during maturation of the TPM1 pre-mRNA. Represses the splicing of MAPT/Tau exon 10. Binds to polypyrimidine-rich controlling element (PCE) of CFTR and promotes exon skipping of CFTR exon 9, thereby antagonizing TIA1 and its role in exon inclusion of CFTR exon 9. Plays a role in the splicing of pyruvate kinase PKM by binding repressively to a polypyrimidine tract flanking PKM exon 9, inhibiting exon 9 inclusion and resulting in exon 10 inclusion and production of the PKM M2 isoform. The polypeptide is Polypyrimidine tract-binding protein 1 (PTBP1) (Bos taurus (Bovine)).